Consider the following 183-residue polypeptide: Ion-translocating oxidoreductase complex subunit B (183 aa).

Positions 1–23 are hydrophobic; that stretch reads MLSALLVMAAIAVVLGAALGFAA. The 4Fe-4S domain maps to 29-88; sequence EGDPLVDKIDAILPQTQCGQCGYPGCKPYAQAIAQGEADINQCPPGGEEGVRKLADLLGR. Positions 46, 49, 54, 71, 113, 116, 119, 123, 143, 146, 149, and 153 each coordinate [4Fe-4S] cluster. 2 consecutive 4Fe-4S ferredoxin-type domains span residues 104-133 and 135-163; these read AVAY…GAAK and MHTV…MEPV.

The protein belongs to the 4Fe4S bacterial-type ferredoxin family. RnfB subfamily. As to quaternary structure, the complex is composed of six subunits: RnfA, RnfB, RnfC, RnfD, RnfE and RnfG. Requires [4Fe-4S] cluster as cofactor.

The protein resides in the cell inner membrane. Functionally, part of a membrane-bound complex that couples electron transfer with translocation of ions across the membrane. The polypeptide is Ion-translocating oxidoreductase complex subunit B (Azoarcus sp. (strain BH72)).